A 491-amino-acid chain; its full sequence is Probable glycine dehydrogenase (decarboxylating) subunit 2 (491 aa).

An N6-(pyridoxal phosphate)lysine modification is found at K264.

This sequence belongs to the GcvP family. C-terminal subunit subfamily. In terms of assembly, the glycine cleavage system is composed of four proteins: P, T, L and H. In this organism, the P 'protein' is a heterodimer of two subunits. The cofactor is pyridoxal 5'-phosphate.

It carries out the reaction N(6)-[(R)-lipoyl]-L-lysyl-[glycine-cleavage complex H protein] + glycine + H(+) = N(6)-[(R)-S(8)-aminomethyldihydrolipoyl]-L-lysyl-[glycine-cleavage complex H protein] + CO2. Functionally, the glycine cleavage system catalyzes the degradation of glycine. The P protein binds the alpha-amino group of glycine through its pyridoxal phosphate cofactor; CO(2) is released and the remaining methylamine moiety is then transferred to the lipoamide cofactor of the H protein. This is Probable glycine dehydrogenase (decarboxylating) subunit 2 from Coxiella burnetii (strain Dugway 5J108-111).